We begin with the raw amino-acid sequence, 489 residues long: Coronin-1B (489 aa).

Ser-2 carries the phosphoserine; by PKC modification. 6 WD repeats span residues 18–72, 73–122, 123–166, 167–210, 211–256, and 257–296; these read QPVK…GRID, KAYP…SPLT, EPVV…GTAE, ELYR…RGTL, VAER…ENLE, and EPMA…RYFE. The tract at residues 408–444 is disordered; it reads RRNVLSDSRPAMAPGSSHLGAPASTTTAADATPSGSL. The span at 428-441 shows a compositional bias: low complexity; that stretch reads APASTTTAADATPS. Positions 449-474 form a coiled coil; the sequence is EAGKLEEVMQELRALRALVKEQGDRI.

It belongs to the WD repeat coronin family. Forms homooligomers, but does not form complexes with the other coronins. Interacts with Arp2/3 complex components, including ACTR2, ARPC1B and ARPC2. Binds actin. Post-translationally, phosphorylation by PKC on Ser-2 regulates the interaction with the Arp2/3 complex and cell motility in fibroblasts. Phosphorylation does not seem to affect subcellular location.

It is found in the cytoplasm. The protein localises to the cytoskeleton. The protein resides in the stress fiber. Its function is as follows. Regulates leading edge dynamics and cell motility in fibroblasts. May be involved in cytokinesis and signal transduction. This is Coronin-1B (CORO1B) from Homo sapiens (Human).